Here is a 277-residue protein sequence, read N- to C-terminus: Shikimate dehydrogenase (NADP(+)) (277 aa).

Shikimate is bound by residues 15–17 (SLS) and T62. The Proton acceptor role is filled by K66. Shikimate is bound by residues N87 and D102. Residues 127–131 (GSGGA), 151–156 (NRTVDK), and I219 each bind NADP(+). Shikimate is bound at residue Y221. G242 is an NADP(+) binding site.

The protein belongs to the shikimate dehydrogenase family. As to quaternary structure, homodimer.

It catalyses the reaction shikimate + NADP(+) = 3-dehydroshikimate + NADPH + H(+). The protein operates within metabolic intermediate biosynthesis; chorismate biosynthesis; chorismate from D-erythrose 4-phosphate and phosphoenolpyruvate: step 4/7. Involved in the biosynthesis of the chorismate, which leads to the biosynthesis of aromatic amino acids. Catalyzes the reversible NADPH linked reduction of 3-dehydroshikimate (DHSA) to yield shikimate (SA). This Bacillus cereus (strain B4264) protein is Shikimate dehydrogenase (NADP(+)).